Here is a 163-residue protein sequence, read N- to C-terminus: Crossover junction endodeoxyribonuclease RuvC (163 aa).

Catalysis depends on residues Asp-7, Glu-67, and Asp-140. Residues Asp-7, Glu-67, and Asp-140 each coordinate Mg(2+).

It belongs to the RuvC family. Homodimer which binds Holliday junction (HJ) DNA. The HJ becomes 2-fold symmetrical on binding to RuvC with unstacked arms; it has a different conformation from HJ DNA in complex with RuvA. In the full resolvosome a probable DNA-RuvA(4)-RuvB(12)-RuvC(2) complex forms which resolves the HJ. The cofactor is Mg(2+).

The protein localises to the cytoplasm. It catalyses the reaction Endonucleolytic cleavage at a junction such as a reciprocal single-stranded crossover between two homologous DNA duplexes (Holliday junction).. The RuvA-RuvB-RuvC complex processes Holliday junction (HJ) DNA during genetic recombination and DNA repair. Endonuclease that resolves HJ intermediates. Cleaves cruciform DNA by making single-stranded nicks across the HJ at symmetrical positions within the homologous arms, yielding a 5'-phosphate and a 3'-hydroxyl group; requires a central core of homology in the junction. The consensus cleavage sequence is 5'-(A/T)TT(C/G)-3'. Cleavage occurs on the 3'-side of the TT dinucleotide at the point of strand exchange. HJ branch migration catalyzed by RuvA-RuvB allows RuvC to scan DNA until it finds its consensus sequence, where it cleaves and resolves the cruciform DNA. The polypeptide is Crossover junction endodeoxyribonuclease RuvC (Petrotoga mobilis (strain DSM 10674 / SJ95)).